Consider the following 596-residue polypeptide: RNA-binding protein involved in heterochromatin assembly dri1 (596 aa).

Residue S176 is modified to Phosphoserine. The region spanning 236–314 (KIVHVAGLTN…RMLEIIPSST (79 aa)) is the RRM domain. The RanBP2-type 1 zinc-finger motif lies at 335–364 (RPGDWNCPMCGFSNFQRRTSCFRCSFPGPT). A Phosphoserine modification is found at S429. RanBP2-type zinc fingers lie at residues 437–468 (RAGD…SRAT) and 552–580 (DQGD…PHYS).

In terms of assembly, interacts with dpb4. Interacts with chp1.

It localises to the chromosome. The protein localises to the nucleus. Its subcellular location is the cytoplasm. The protein resides in the cytoplasmic granule. In terms of biological role, mediates heterochromatin assembly by promoting RNAi-mediated heterochromatin silencing and histone deacetylation. Binds pericetromeric transcripts and recruits the RNA-induced transcriptional silencing (RITS) complex to heterochromatin. Recruits sir2 to chromatin to promote deacetylation of 'Lys-9' of histone H3. Involved in bipolar spindle assembly during mitosis. Required for proper localization of kinesin-14/Klp2 on the spindle microtubules. The protein is RNA-binding protein involved in heterochromatin assembly dri1 of Schizosaccharomyces pombe (strain 972 / ATCC 24843) (Fission yeast).